Here is a 303-residue protein sequence, read N- to C-terminus: T-box protein 38 (303 aa).

The T-box DNA-binding region spans 14-195; the sequence is LSTPEIWEEF…HNKFASGFRS (182 aa). The disordered stretch occupies residues 193-225; it reads FRSNGKRRLSSDSENSENSPPKRSKLVTPPTIS. Positions 204-213 are enriched in low complexity; sequence DSENSENSPP.

It localises to the nucleus. Its function is as follows. Transcription factor. Required for mesodermal induction, acting redundantly with transcription factor tbx-37. Together with tbx-37, acts by inducing cell fates in the AB lineage, thereby playing a role in development of the anterior pharynx. The chain is T-box protein 38 (tbx-38) from Caenorhabditis elegans.